We begin with the raw amino-acid sequence, 1168 residues long: DNA-directed RNA polymerase subunit beta (1168 aa).

It belongs to the RNA polymerase beta chain family. The RNAP catalytic core consists of 2 alpha, 1 beta, 1 beta' and 1 omega subunit. When a sigma factor is associated with the core the holoenzyme is formed, which can initiate transcription.

It carries out the reaction RNA(n) + a ribonucleoside 5'-triphosphate = RNA(n+1) + diphosphate. In terms of biological role, DNA-dependent RNA polymerase catalyzes the transcription of DNA into RNA using the four ribonucleoside triphosphates as substrates. This Rhodococcus opacus (strain B4) protein is DNA-directed RNA polymerase subunit beta.